We begin with the raw amino-acid sequence, 263 residues long: 3-methyl-2-oxobutanoate hydroxymethyltransferase (263 aa).

Mg(2+)-binding residues include Asp-45 and Asp-84. Residues 45–46 (DS), Asp-84, and Lys-112 each bind 3-methyl-2-oxobutanoate. Glu-114 is a Mg(2+) binding site. The Proton acceptor role is filled by Glu-180.

Belongs to the PanB family. As to quaternary structure, homodecamer; pentamer of dimers. It depends on Mg(2+) as a cofactor.

The protein localises to the cytoplasm. It catalyses the reaction 3-methyl-2-oxobutanoate + (6R)-5,10-methylene-5,6,7,8-tetrahydrofolate + H2O = 2-dehydropantoate + (6S)-5,6,7,8-tetrahydrofolate. It functions in the pathway cofactor biosynthesis; (R)-pantothenate biosynthesis; (R)-pantoate from 3-methyl-2-oxobutanoate: step 1/2. Functionally, catalyzes the reversible reaction in which hydroxymethyl group from 5,10-methylenetetrahydrofolate is transferred onto alpha-ketoisovalerate to form ketopantoate. The chain is 3-methyl-2-oxobutanoate hydroxymethyltransferase from Salmonella enteritidis PT4 (strain P125109).